A 672-amino-acid polypeptide reads, in one-letter code: F(420)H(2) dehydrogenase subunit L (672 aa).

Transmembrane regions (helical) follow at residues 8–28, 37–57, 79–99, 136–156, 179–199, 225–245, 265–285, 298–318, 337–357, 360–380, 394–414, 447–467, 483–503, 545–565, 601–621, and 652–672; these read EFAF…FFFG, IVPI…TLGL, ILID…SLLI, ILQL…LIGF, VMFL…SGGF, ILGF…GGAV, TTVS…YLVA, LMVV…MGIV, MMLG…ISLF, INHA…IHAV, VMPI…GFGI, YVFS…LIFM, PAIM…FGAL, LAVL…AFVI, FSIG…DVII, and TALI…MEVL.

It belongs to the complex I subunit 5 family. In terms of assembly, the FPO complex is composed of at least 13 different subunits. FpoA, FpoH, FpoJ, FpoK, FpoL, FpoM and FpoN proteins constitute the membrane sector of the complex.

The protein resides in the cell membrane. It catalyses the reaction methanophenazine + reduced coenzyme F420-(gamma-L-Glu)(n) = dihydromethanophenazine + oxidized coenzyme F420-(gamma-L-Glu)(n) + H(+). In terms of biological role, component of the F(420)H(2) dehydrogenase (FPO complex) which is part of the energy-conserving F(420)H(2):heterodisulfide oxidoreductase system. The membrane-bound electron transfer system of the complex plays an important role in the metabolism of methylotrophic methanogens when the organisms grow on methanol or methylamines. Catalyzes the oxidation of methanophenazine to dihydromethanophenazine. It shuttles electrons from F(420)H(2), via FAD and iron-sulfur (Fe-S) centers, to methanophenazine (an electron carrier in the membrane). It couples the redox reaction to proton translocation (for every two electrons transferred, two hydrogen ions are translocated across the cytoplasmic membrane), and thus conserves the redox energy in a proton gradient. It also catalyzes the oxidation of F(420)H(2) with quinones such as 2,3-dimethyl-1,4-naphthoquinone, 2-methyl-1,4-naphthoquinone and tetramethyl-p-benzoquinone. This is F(420)H(2) dehydrogenase subunit L (fpoL) from Methanosarcina mazei (strain ATCC BAA-159 / DSM 3647 / Goe1 / Go1 / JCM 11833 / OCM 88) (Methanosarcina frisia).